Here is a 100-residue protein sequence, read N- to C-terminus: Noncompact myelin-associated protein (100 aa).

Residues Met-1–Gly-28 lie on the Extracellular side of the membrane. A helical membrane pass occupies residues Ala-29 to Leu-49. Residues Lys-50–Arg-100 are Cytoplasmic-facing. The disordered stretch occupies residues Thr-58–Arg-100.

In terms of processing, glycosylated. As to expression, found in the peripheral nervous system (PNS) Schwann cells (at protein level). Expressed in the PNS, primarily limited to Schwann cells.

It is found in the cell membrane. Its function is as follows. Plays a role in myelin formation. This is Noncompact myelin-associated protein (Ncmap) from Mus musculus (Mouse).